An 86-amino-acid chain; its full sequence is Protein Tat (86 aa).

Residues 1-21 (MDPVDPNLEPWNHPGSQPKTA) are disordered. An interaction with human CREBBP region spans residues 1-24 (MDPVDPNLEPWNHPGSQPKTACNR). The transactivation stretch occupies residues 1–48 (MDPVDPNLEPWNHPGSQPKTACNRCHCKKCCYHCQVCFITKGLGISYG). The Zn(2+) site is built by cysteine 22, cysteine 25, and cysteine 27. Positions 22-37 (CNRCHCKKCCYHCQVC) are cysteine-rich. Lysine 28 is subject to N6-acetyllysine; by host PCAF. The Zn(2+) site is built by cysteine 30, histidine 33, cysteine 34, and cysteine 37. The interval 38–48 (FITKGLGISYG) is core. A disordered region spans residues 47–86 (YGRKKRRQRRRPSQGGQTHQDPIPKQPSSQPRGNPTGPKE). A compositionally biased stretch (basic residues) spans 48-58 (GRKKRRQRRRP). A Nuclear localization signal, RNA-binding (TAR), and protein transduction motif is present at residues 49 to 57 (RKKRRQRRR). Residues 49-86 (RKKRRQRRRPSQGGQTHQDPIPKQPSSQPRGNPTGPKE) form an interaction with the host capping enzyme RNGTT region. N6-acetyllysine; by host EP300 and GCN5L2 is present on residues lysine 50 and lysine 51. Asymmetric dimethylarginine; by host PRMT6 occurs at positions 52 and 53. Positions 60 to 79 (QGGQTHQDPIPKQPSSQPRG) are enriched in polar residues. Lysine 71 participates in a covalent cross-link: Glycyl lysine isopeptide (Lys-Gly) (interchain with G-Cter in ubiquitin).

Belongs to the lentiviruses Tat family. In terms of assembly, interacts with host CCNT1. Associates with the P-TEFb complex composed at least of Tat, P-TEFb (CDK9 and CCNT1), TAR RNA, RNA Pol II. Recruits the HATs CREBBP, TAF1/TFIID, EP300, PCAF and GCN5L2. Interacts with host KAT5/Tip60; this interaction targets the latter to degradation. Interacts with the host deacetylase SIRT1. Interacts with host capping enzyme RNGTT; this interaction stimulates RNGTT. Binds to host KDR, and to the host integrins ITGAV/ITGB3 and ITGA5/ITGB1. Interacts with host KPNB1/importin beta-1 without previous binding to KPNA1/importin alpha-1. Interacts with EIF2AK2. Interacts with host nucleosome assembly protein NAP1L1; this interaction may be required for the transport of Tat within the nucleus, since the two proteins interact at the nuclear rim. Interacts with host C1QBP/SF2P32; this interaction involves lysine-acetylated Tat. Interacts with the host chemokine receptors CCR2, CCR3 and CXCR4. Interacts with host DPP4/CD26; this interaction may trigger an anti-proliferative effect. Interacts with host LDLR. Interacts with the host extracellular matrix metalloproteinase MMP1. Interacts with host PRMT6; this interaction mediates Tat's methylation. Interacts with, and is ubiquitinated by MDM2/Hdm2. Interacts with host PSMC3 and HTATIP2. Interacts with STAB1; this interaction may overcome SATB1-mediated repression of IL2 and IL2RA (interleukin) in T cells by binding to the same domain than HDAC1. Interacts (when acetylated) with human CDK13, thereby increasing HIV-1 mRNA splicing and promoting the production of the doubly spliced HIV-1 protein Nef. Interacts with host TBP; this interaction modulates the activity of transcriptional pre-initiation complex. Interacts with host RELA. Interacts with host PLSCR1; this interaction negatively regulates Tat transactivation activity by altering its subcellular distribution. Asymmetrical arginine methylation by host PRMT6 seems to diminish the transactivation capacity of Tat and affects the interaction with host CCNT1. Post-translationally, acetylation by EP300, CREBBP, GCN5L2/GCN5 and PCAF regulates the transactivation activity of Tat. EP300-mediated acetylation of Lys-50 promotes dissociation of Tat from the TAR RNA through the competitive binding to PCAF's bromodomain. In addition, the non-acetylated Tat's N-terminus can also interact with PCAF. PCAF-mediated acetylation of Lys-28 enhances Tat's binding to CCNT1. Lys-50 is deacetylated by SIRT1. In terms of processing, polyubiquitination by host MDM2 does not target Tat to degradation, but activates its transactivation function and fosters interaction with CCNT1 and TAR RNA. Phosphorylated by EIF2AK2 on serine and threonine residues adjacent to the basic region important for TAR RNA binding and function. Phosphorylation of Tat by EIF2AK2 is dependent on the prior activation of EIF2AK2 by dsRNA.

The protein localises to the host nucleus. It localises to the host nucleolus. The protein resides in the host cytoplasm. It is found in the secreted. In terms of biological role, transcriptional activator that increases RNA Pol II processivity, thereby increasing the level of full-length viral transcripts. Recognizes a hairpin structure at the 5'-LTR of the nascent viral mRNAs referred to as the transactivation responsive RNA element (TAR) and recruits the cyclin T1-CDK9 complex (P-TEFb complex) that will in turn hyperphosphorylate the RNA polymerase II to allow efficient elongation. The CDK9 component of P-TEFb and other Tat-activated kinases hyperphosphorylate the C-terminus of RNA Pol II that becomes stabilized and much more processive. Other factors such as HTATSF1/Tat-SF1, SUPT5H/SPT5, and HTATIP2 are also important for Tat's function. Besides its effect on RNA Pol II processivity, Tat induces chromatin remodeling of proviral genes by recruiting the histone acetyltransferases (HATs) CREBBP, EP300 and PCAF to the chromatin. This also contributes to the increase in proviral transcription rate, especially when the provirus integrates in transcriptionally silent region of the host genome. To ensure maximal activation of the LTR, Tat mediates nuclear translocation of NF-kappa-B by interacting with host RELA. Through its interaction with host TBP, Tat may also modulate transcription initiation. Tat can reactivate a latently infected cell by penetrating in it and transactivating its LTR promoter. In the cytoplasm, Tat is thought to act as a translational activator of HIV-1 mRNAs. Extracellular circulating Tat can be endocytosed by surrounding uninfected cells via the binding to several surface receptors such as CD26, CXCR4, heparan sulfate proteoglycans (HSPG) or LDLR. Neurons are rarely infected, but they internalize Tat via their LDLR. Through its interaction with nuclear HATs, Tat is potentially able to control the acetylation-dependent cellular gene expression. Modulates the expression of many cellular genes involved in cell survival, proliferation or in coding for cytokines or cytokine receptors. Tat plays a role in T-cell and neurons apoptosis. Tat induced neurotoxicity and apoptosis probably contribute to neuroAIDS. Circulating Tat also acts as a chemokine-like and/or growth factor-like molecule that binds to specific receptors on the surface of the cells, affecting many cellular pathways. In the vascular system, Tat binds to ITGAV/ITGB3 and ITGA5/ITGB1 integrins dimers at the surface of endothelial cells and competes with bFGF for heparin-binding sites, leading to an excess of soluble bFGF. This chain is Protein Tat, found in Homo sapiens (Human).